The sequence spans 981 residues: Polyhomeotic-like protein 3 (981 aa).

Residues 1-28 are compositionally biased toward low complexity; it reads MDSEPSSGTSVSTTASSTTTTTITTSSS. 4 disordered regions span residues 1–33, 102–127, 224–280, and 307–407; these read MDSE…MQQP, LSSG…TSIL, LSSS…TAVT, and QIPL…SQSP. The span at 224 to 255 shows a compositional bias: polar residues; the sequence is LSSSQNGSPKSAGQTQSLTICHNKTTVTSSKI. 4 positions are modified to phosphoserine: Ser231, Ser261, Ser269, and Ser312. Positions 256-266 are enriched in basic and acidic residues; that stretch reads SQRDPSPESKK. Residues 321–340 are compositionally biased toward low complexity; it reads QLLLQQQQQQIQPITLQSPS. Polar residues predominate over residues 360 to 373; that stretch reads APSNAQPQHCSPVQ. A compositionally biased stretch (low complexity) spans 381–395; the sequence is VSPNQAQSAQQSVVV. Phosphothreonine is present on residues Thr607 and Thr612. Ser614 is subject to Phosphoserine. The segment at 650-690 is disordered; that stretch reads KSPSDPTHASAPAPPLLIPAASTRSSSTSLASSTPSLENKP. Positions 667 to 686 are enriched in low complexity; it reads IPAASTRSSSTSLASSTPSL. Residues Lys689 and Lys730 each participate in a glycyl lysine isopeptide (Lys-Gly) (interchain with G-Cter in SUMO2) cross-link. The HD1 motif lies at 689 to 718; it reads KPPQAIVKPQILTHVIEGFVIQEGLEPFPV. Phosphoserine occurs at positions 759 and 760. The segment at 774 to 808 adopts an FCS-type zinc-finger fold; that stretch reads EEMDSELLKCEFCGKMGYPNEFLRSKRFCTMSCAK. Zn(2+)-binding residues include Cys783, Cys786, Cys802, and Cys806. A Glycyl lysine isopeptide (Lys-Gly) (interchain with G-Cter in SUMO2) cross-link involves residue Lys808. 2 disordered regions span residues 825–844 and 863–888; these read RKPD…GPEG and EDVA…ERER. The SAM domain maps to 917–981; sequence WTVDDVWAFI…CARINSLKDS (65 aa).

As to quaternary structure, component of a PRC1-like complex. As to expression, ubiquitous expression.

The protein localises to the nucleus. Component of a Polycomb group (PcG) multiprotein PRC1-like complex, a complex class required to maintain the transcriptionally repressive state of many genes, including Hox genes, throughout development. PcG PRC1 complex acts via chromatin remodeling and modification of histones; it mediates monoubiquitination of histone H2A 'Lys-119', rendering chromatin heritably changed in its expressibility. The chain is Polyhomeotic-like protein 3 (Phc3) from Mus musculus (Mouse).